A 304-amino-acid polypeptide reads, in one-letter code: Cell surface-binding protein OPG105 (304 aa).

Residues 1–235 (MPQQLSPINI…NDDTQVYYSG (235 aa)) enclose the Alpha-carbonic anhydrase domain. Residues 1 to 275 (MPQQLSPINI…YQKYIEENKT (275 aa)) are Virion surface-facing. Residues 276–294 (FAIIAIVFVFILTAILFFM) form a helical membrane-spanning segment. Over 295–304 (SRRYSREKQN) the chain is Intravirion.

This sequence belongs to the alpha-carbonic anhydrase family. In terms of assembly, homodimer; disulfide-linked. In terms of processing, apparently non-glycosylated.

It is found in the virion membrane. Functionally, binds to chondroitin sulfate on the cell surface to provide virion attachment to target cell. The polypeptide is Cell surface-binding protein OPG105 (OPG105) (Homo sapiens (Human)).